We begin with the raw amino-acid sequence, 567 residues long: Organic cation transporter-like protein (567 aa).

The Cytoplasmic segment spans residues 1 to 21 (MGYDEAIIHLGDFGRYQKIIY). Residues 22–42 (FLICLTSIPVAFHKLAGVFLL) form a helical membrane-spanning segment. The Extracellular segment spans residues 43–127 (AKPDFRCALP…TEWNLVCGRD (85 aa)). 4 N-linked (GlcNAc...) asparagine glycosylation sites follow: Asn-55, Asn-67, Asn-89, and Asn-97. A helical membrane pass occupies residues 128 to 148 (FMAATSDSLFMLGVLLGSIVF). At 149–158 (GQLSDKYGRK) the chain is on the cytoplasmic side. Residues 159–179 (PILFASLVIQVLFGVLAGVAP) traverse the membrane as a helical segment. At 180–189 (EYFTYTFARL) the chain is on the extracellular side. A helical transmembrane segment spans residues 190–210 (MVGATTSGVFLVAYVVAMEMV). The Cytoplasmic portion of the chain corresponds to 211–219 (GPDKRLYAG). The helical transmembrane segment at 220–240 (IFVMMFFSVGFMLTAVFAYFV) threads the bilayer. Topologically, residues 241 to 244 (HDWR) are extracellular. A helical transmembrane segment spans residues 245 to 265 (WLQIALTLPGLIFMFYYWIIP). Topologically, residues 266-343 (ESARWLLLKG…LFCYPNLRRK (78 aa)) are cytoplasmic. A disordered region spans residues 304–326 (LDEGENSEEKAKQKLEDQELDEG). Positions 310–320 (SEEKAKQKLED) are enriched in basic and acidic residues. Residues 344–364 (TLLIFLDWLVTSGVYYGLSWN) form a helical membrane-spanning segment. The Extracellular segment spans residues 365–371 (TSNLGGN). The helical transmembrane segment at 372–392 (VLLNFVISGAVEIPAYIFLLL) threads the bilayer. Residues 393–400 (TLNRWGRR) are Cytoplasmic-facing. Residues 401-421 (SILCGCLVMAGLSLLATVIIP) form a helical membrane-spanning segment. Residues 422–427 (QRMHTL) lie on the Extracellular side of the membrane. The chain crosses the membrane as a helical span at residues 428-448 (IVACAMLGKLAITASYGTVYI). At 449–462 (FSAEQFPTVVRNVA) the chain is on the cytoplasmic side. A helical membrane pass occupies residues 463 to 483 (LGAASMVARISGMMAPFLNFL). The Extracellular portion of the chain corresponds to 484 to 489 (ATIWKP). The chain crosses the membrane as a helical span at residues 490–510 (LPLLICGSLTLVAGLLSLLLP). The Cytoplasmic portion of the chain corresponds to 511 to 567 (ETHNKPMLETIADGERFGKKTKADVYLETGQELRAPEAQPLKGSGETNGSTIANGHK). The interval 546–567 (PEAQPLKGSGETNGSTIANGHK) is disordered. Over residues 555 to 567 (GETNGSTIANGHK) the composition is skewed to polar residues.

The protein belongs to the major facilitator (TC 2.A.1) superfamily. Organic cation transporter (TC 2.A.1.19) family.

The protein resides in the membrane. Functionally, probably transports organic cations. This chain is Organic cation transporter-like protein (Orct2), found in Drosophila melanogaster (Fruit fly).